A 794-amino-acid polypeptide reads, in one-letter code: Elongator complex protein 2 (794 aa).

13 WD repeats span residues Glu55–Ser93, Gly98–Phe140, Asp147–Gly188, Gly203–Met244, Gly286–Glu328, Gly337–Trp376, Gly384–Pro423, Ile433–Arg472, Gly557–Lys601, Gly604–Gln643, Val654–Ser693, Leu705–Leu751, and Ala759–Thr794.

This sequence belongs to the WD repeat ELP2 family. Component of the elongator complex composed of Elp1, Elp2, Elp3, Elp4, Elp5 and Elp6. The elongator complex associates with and stabilizes microtubules; efficient interaction requires the full complex.

The protein localises to the cytoplasm. The protein resides in the nucleus. It is found in the cytoskeleton. It localises to the spindle. Its pathway is tRNA modification; 5-methoxycarbonylmethyl-2-thiouridine-tRNA biosynthesis. Component of the elongator complex, which is required for multiple tRNA modifications, including mcm5U (5-methoxycarbonylmethyl uridine), mcm5s2U (5-methoxycarbonylmethyl-2-thiouridine), and ncm5U (5-carbamoylmethyl uridine). The elongator complex catalyzes the formation of carboxymethyluridine in the wobble base at position 34 in tRNAs. Binding by the elongator complex stabilizes microtubules and promotes their growth. This induces central spindle asymmetry, promoting polarized signaling endosome trafficking during asymmetric cell division and cell fate assignation of sensory organ precursor cells. Involved in the regulation of the STAT pathway. This chain is Elongator complex protein 2, found in Drosophila melanogaster (Fruit fly).